The following is a 208-amino-acid chain: Small ribosomal subunit protein uS4B (208 aa).

The 66-residue stretch at 95–160 folds into the S4 RNA-binding domain; that stretch reads KRLDNVVFRL…NQVYMAAKQA (66 aa).

The protein belongs to the universal ribosomal protein uS4 family. In terms of assembly, part of the 30S ribosomal subunit. Contacts protein S5. The interaction surface between S4 and S5 is involved in control of translational fidelity.

In terms of biological role, one of the primary rRNA binding proteins, it binds directly to 16S rRNA where it nucleates assembly of the body of the 30S subunit. Its function is as follows. With S5 and S12 plays an important role in translational accuracy. This chain is Small ribosomal subunit protein uS4B, found in Bdellovibrio bacteriovorus (strain ATCC 15356 / DSM 50701 / NCIMB 9529 / HD100).